Consider the following 227-residue polypeptide: Cytochrome c oxidase subunit 2 (227 aa).

Residues 1–14 lie on the Mitochondrial intermembrane side of the membrane; that stretch reads MAHPAQLGFQDAAS. The helical transmembrane segment at 15–45 threads the bilayer; it reads PIMEELMYFHDHTLMIVFLISSLVLYIISLM. Residues 46–59 are Mitochondrial matrix-facing; sequence LTTELTHTSTMDAQ. A helical membrane pass occupies residues 60–87; the sequence is EVETVWTILPAVILILIALPSLRILYMM. At 88-227 the chain is on the mitochondrial intermembrane side; the sequence is DEITTPSLTL…HFEEWLLSTL (140 aa). 6 residues coordinate Cu cation: His-161, Cys-196, Glu-198, Cys-200, His-204, and Met-207. Glu-198 is a binding site for Mg(2+).

This sequence belongs to the cytochrome c oxidase subunit 2 family. As to quaternary structure, component of the cytochrome c oxidase (complex IV, CIV), a multisubunit enzyme composed of 14 subunits. The complex is composed of a catalytic core of 3 subunits MT-CO1, MT-CO2 and MT-CO3, encoded in the mitochondrial DNA, and 11 supernumerary subunits COX4I, COX5A, COX5B, COX6A, COX6B, COX6C, COX7A, COX7B, COX7C, COX8 and NDUFA4, which are encoded in the nuclear genome. The complex exists as a monomer or a dimer and forms supercomplexes (SCs) in the inner mitochondrial membrane with NADH-ubiquinone oxidoreductase (complex I, CI) and ubiquinol-cytochrome c oxidoreductase (cytochrome b-c1 complex, complex III, CIII), resulting in different assemblies (supercomplex SCI(1)III(2)IV(1) and megacomplex MCI(2)III(2)IV(2)). Found in a complex with TMEM177, COA6, COX18, COX20, SCO1 and SCO2. Interacts with TMEM177 in a COX20-dependent manner. Interacts with COX20. Interacts with COX16. Requires Cu cation as cofactor.

Its subcellular location is the mitochondrion inner membrane. The enzyme catalyses 4 Fe(II)-[cytochrome c] + O2 + 8 H(+)(in) = 4 Fe(III)-[cytochrome c] + 2 H2O + 4 H(+)(out). Functionally, component of the cytochrome c oxidase, the last enzyme in the mitochondrial electron transport chain which drives oxidative phosphorylation. The respiratory chain contains 3 multisubunit complexes succinate dehydrogenase (complex II, CII), ubiquinol-cytochrome c oxidoreductase (cytochrome b-c1 complex, complex III, CIII) and cytochrome c oxidase (complex IV, CIV), that cooperate to transfer electrons derived from NADH and succinate to molecular oxygen, creating an electrochemical gradient over the inner membrane that drives transmembrane transport and the ATP synthase. Cytochrome c oxidase is the component of the respiratory chain that catalyzes the reduction of oxygen to water. Electrons originating from reduced cytochrome c in the intermembrane space (IMS) are transferred via the dinuclear copper A center (CU(A)) of subunit 2 and heme A of subunit 1 to the active site in subunit 1, a binuclear center (BNC) formed by heme A3 and copper B (CU(B)). The BNC reduces molecular oxygen to 2 water molecules using 4 electrons from cytochrome c in the IMS and 4 protons from the mitochondrial matrix. This Microcebus tavaratra (Northern rufous mouse lemur) protein is Cytochrome c oxidase subunit 2 (MT-CO2).